The primary structure comprises 302 residues: Quinolinate synthase (302 aa).

Iminosuccinate-binding residues include histidine 24 and serine 41. Cysteine 86 provides a ligand contact to [4Fe-4S] cluster. Iminosuccinate contacts are provided by residues 112–114 (YVN) and serine 129. Position 171 (cysteine 171) interacts with [4Fe-4S] cluster. Residues 197 to 199 (HPE) and threonine 214 contribute to the iminosuccinate site. Residue cysteine 259 coordinates [4Fe-4S] cluster.

This sequence belongs to the quinolinate synthase family. Type 2 subfamily. Requires [4Fe-4S] cluster as cofactor.

The protein localises to the cytoplasm. It catalyses the reaction iminosuccinate + dihydroxyacetone phosphate = quinolinate + phosphate + 2 H2O + H(+). Its pathway is cofactor biosynthesis; NAD(+) biosynthesis; quinolinate from iminoaspartate: step 1/1. In terms of biological role, catalyzes the condensation of iminoaspartate with dihydroxyacetone phosphate to form quinolinate. This chain is Quinolinate synthase, found in Dehalococcoides mccartyi (strain CBDB1).